We begin with the raw amino-acid sequence, 192 residues long: Imidazole glycerol phosphate synthase subunit HisH (192 aa).

Positions 1-192 (MIAIIDYGLG…QALKGGFIND (192 aa)) constitute a Glutamine amidotransferase type-1 domain. Cysteine 77 (nucleophile) is an active-site residue. Active-site residues include histidine 169 and glutamate 171.

As to quaternary structure, heterodimer of HisH and HisF.

It is found in the cytoplasm. The catalysed reaction is 5-[(5-phospho-1-deoxy-D-ribulos-1-ylimino)methylamino]-1-(5-phospho-beta-D-ribosyl)imidazole-4-carboxamide + L-glutamine = D-erythro-1-(imidazol-4-yl)glycerol 3-phosphate + 5-amino-1-(5-phospho-beta-D-ribosyl)imidazole-4-carboxamide + L-glutamate + H(+). It carries out the reaction L-glutamine + H2O = L-glutamate + NH4(+). Its pathway is amino-acid biosynthesis; L-histidine biosynthesis; L-histidine from 5-phospho-alpha-D-ribose 1-diphosphate: step 5/9. In terms of biological role, IGPS catalyzes the conversion of PRFAR and glutamine to IGP, AICAR and glutamate. The HisH subunit catalyzes the hydrolysis of glutamine to glutamate and ammonia as part of the synthesis of IGP and AICAR. The resulting ammonia molecule is channeled to the active site of HisF. This chain is Imidazole glycerol phosphate synthase subunit HisH, found in Staphylococcus epidermidis (strain ATCC 12228 / FDA PCI 1200).